Reading from the N-terminus, the 589-residue chain is UvrABC system protein C (589 aa).

The GIY-YIG domain occupies 13–90; that stretch reads PNPGCYLFKN…IKTHTPKYNF (78 aa). The region spanning 194–229 is the UVR domain; that stretch reads KDILKKLHHLMQKASEKMFYEKAQEYRDIIDSIKQT.

It belongs to the UvrC family. In terms of assembly, interacts with UvrB in an incision complex.

The protein resides in the cytoplasm. The UvrABC repair system catalyzes the recognition and processing of DNA lesions. UvrC both incises the 5' and 3' sides of the lesion. The N-terminal half is responsible for the 3' incision and the C-terminal half is responsible for the 5' incision. This is UvrABC system protein C from Aster yellows witches'-broom phytoplasma (strain AYWB).